Reading from the N-terminus, the 242-residue chain is uncharacterized protein (242 aa).

An HTH gntR-type domain is found at 17–85 (QRVDERIATT…HGSGSVVRDP (69 aa)). The H-T-H motif DNA-binding region spans 45–64 (ERDLAERLGVNRTSLRQGLA).

This is an uncharacterized protein from Mycobacterium tuberculosis (strain ATCC 25618 / H37Rv).